Here is a 469-residue protein sequence, read N- to C-terminus: Cytosolic beta-glucosidase (469 aa).

Gln17, His120, and Asn164 together coordinate substrate. The active-site Proton donor is Glu165. Tyr309 serves as a coordination point for substrate. The Nucleophile role is filled by Glu373. Substrate contacts are provided by residues Trp417 and 424–425 (EW).

The protein belongs to the glycosyl hydrolase 1 family. Klotho subfamily. As to quaternary structure, may interact with NEU2. Post-translationally, the N-terminus is blocked. In terms of tissue distribution, present in small intestine (at protein level). Expressed in liver, small intestine, colon, spleen and kidney. Down-regulated in renal cell carcinomas and hepatocellular carcinomas.

It is found in the cytoplasm. The protein resides in the cytosol. It carries out the reaction Hydrolysis of terminal, non-reducing beta-D-glucosyl residues with release of beta-D-glucose.. It catalyses the reaction a beta-D-glucosyl-(1&lt;-&gt;1')-N-acylsphing-4-enine + H2O = an N-acylsphing-4-enine + D-glucose. The enzyme catalyses a beta-D-galactosyl-(1&lt;-&gt;1')-N-acylsphing-4-enine + H2O = an N-acylsphing-4-enine + D-galactose. The catalysed reaction is beta-D-glucosyl-(1&lt;-&gt;1)-sphing-4-enine + H2O = sphing-4-enine + D-glucose. It carries out the reaction beta-D-glucosyl-(1&lt;-&gt;1)-N-octadecanoylsphing-4-enine + H2O = N-octadecanoylsphing-4-enine + D-glucose. It catalyses the reaction beta-D-galactosyl-(1&lt;-&gt;1)-sphing-4-enine + H2O = sphing-4-enine + D-galactose. The enzyme catalyses beta-D-galactosyl-(1&lt;-&gt;1')-N-octadecanoylsphing-4-enine + H2O = N-octadecanoylsphing-4-enine + D-galactose. The catalysed reaction is a beta-D-xylosyl-(1&lt;-&gt;1')-N-acylsphing-4-enine + cholesterol = cholesteryl 3-beta-D-xyloside + an N-acylsphing-4-enine. With respect to regulation, inhibited by 2,4-dinitrophenyl-2-fluoro-2-deoxy-beta-D-glucopyranoside. Inhibited by sodium taurocholate. Inhibited by alpha-1-C-nonyl-DIX/AnDIX. The glucosylceramidase activity is slightly inhibited by conduritol B epoxide/CBE while the galactosylceramidase activity is not. In terms of biological role, neutral cytosolic beta-glycosidase with a broad substrate specificity that could play a role in the catabolism of glycosylceramides. Has a significant glucosylceramidase activity in vitro. However, that activity is relatively low and its significance in vivo is not clear. Hydrolyzes galactosylceramides/GalCers, glucosylsphingosines/GlcSphs and galactosylsphingosines/GalSphs. However, the in vivo relevance of these activities is unclear. It can also hydrolyze a broad variety of dietary glycosides including phytoestrogens, flavonols, flavones, flavanones and cyanogens in vitro and could therefore play a role in the metabolism of xenobiotics. Possesses transxylosylase activity in vitro using xylosylated ceramides/XylCers (such as beta-D-xylosyl-(1&lt;-&gt;1')-N-acylsphing-4-enine) as xylosyl donors and cholesterol as acceptor. Could also play a role in the catabolism of cytosolic sialyl free N-glycans. The chain is Cytosolic beta-glucosidase from Homo sapiens (Human).